A 407-amino-acid polypeptide reads, in one-letter code: Tryptophan synthase beta chain (407 aa).

K91 carries the post-translational modification N6-(pyridoxal phosphate)lysine.

This sequence belongs to the TrpB family. As to quaternary structure, tetramer of two alpha and two beta chains. Requires pyridoxal 5'-phosphate as cofactor.

The catalysed reaction is (1S,2R)-1-C-(indol-3-yl)glycerol 3-phosphate + L-serine = D-glyceraldehyde 3-phosphate + L-tryptophan + H2O. Its pathway is amino-acid biosynthesis; L-tryptophan biosynthesis; L-tryptophan from chorismate: step 5/5. In terms of biological role, the beta subunit is responsible for the synthesis of L-tryptophan from indole and L-serine. The chain is Tryptophan synthase beta chain from Streptococcus pneumoniae (strain Taiwan19F-14).